We begin with the raw amino-acid sequence, 615 residues long: ATP-dependent RNA helicase mrh4, mitochondrial (615 aa).

A mitochondrion-targeting transit peptide spans 1–37 (MLRPKAGKCLLCSFRAAQKPVSQKWPSRALSMRTRLP). Residues 21-108 (VSQKWPSRAL…HRDRDDKKDR (88 aa)) are disordered. Over residues 90–108 (QERRTSRLDHRDRDDKKDR) the composition is skewed to basic and acidic residues. The short motif at 138–171 (QSFEQFALLDSVKQAIFQQALPELKEHVPTPVQR) is the Q motif element. In terms of domain architecture, Helicase ATP-binding spans 184–395 (RRPKSEMEQY…RKRFPDINRL (212 aa)). ATP is bound at residue 197 to 204 (AETGSGKT). The DEAD box motif lies at 342–345 (DEAD). Positions 444 to 615 (PVKGLMDVKR…EGMFEGKALI (172 aa)) constitute a Helicase C-terminal domain.

It belongs to the DEAD box helicase family. MRH4 subfamily.

The protein localises to the mitochondrion. The enzyme catalyses ATP + H2O = ADP + phosphate + H(+). Functionally, ATP-binding RNA helicase involved in mitochondrial RNA metabolism. Required for maintenance of mitochondrial DNA. This is ATP-dependent RNA helicase mrh4, mitochondrial (mrh4) from Sclerotinia sclerotiorum (strain ATCC 18683 / 1980 / Ss-1) (White mold).